Consider the following 487-residue polypeptide: Sensor protein CseC (487 aa).

Residues 1–11 (MRGNLRRPGPA) show a composition bias toward low complexity. The disordered stretch occupies residues 1–41 (MRGNLRRPGPAGTAGPGRTGIRTSADGGRARPRTGAGTGVR). 2 helical membrane passes run 63-83 (ISAA…LVVH) and 185-205 (ALII…VLIG). One can recognise an HAMP domain in the interval 206 to 262 (GQLSRRLRKAAAAANQVAQGERDVRVRDAIGGVVRDETDDLARAVDAMADALQQRIE). The region spanning 270-472 (DIAHELRTPV…VAVLWLPEHA (203 aa)) is the Histidine kinase domain. Residue His-273 is modified to Phosphohistidine; by autocatalysis.

It localises to the cell membrane. It catalyses the reaction ATP + protein L-histidine = ADP + protein N-phospho-L-histidine.. This is Sensor protein CseC (cseC) from Streptomyces avermitilis (strain ATCC 31267 / DSM 46492 / JCM 5070 / NBRC 14893 / NCIMB 12804 / NRRL 8165 / MA-4680).